Here is a 581-residue protein sequence, read N- to C-terminus: Multidrug resistance-like ATP-binding protein MdlA (581 aa).

Residues 18–303 (YLGSIILLII…LAWMFNIVER (286 aa)) form the ABC transmembrane type-1 domain. The next 6 membrane-spanning stretches (helical) occupy residues 23–43 (ILLI…GILI), 53–73 (GFEI…VYIL), 127–149 (VVFA…ISVL), 153–175 (ITQI…AILI), 247–267 (VIYL…GWLV), and 280–300 (FIMY…MFNI). Residues 337-571 (INIDMFFYPK…KNWYKSMYDH (235 aa)) form the ABC transporter domain. Position 369–376 (369–376 (GPTGAGKS)) interacts with ATP.

It belongs to the ABC transporter superfamily. Drug exporter-2 (TC 3.A.1.117) family.

The protein resides in the cell membrane. The catalysed reaction is ATP + H2O + xenobioticSide 1 = ADP + phosphate + xenobioticSide 2.. The protein is Multidrug resistance-like ATP-binding protein MdlA (mdlA) of Buchnera aphidicola subsp. Schizaphis graminum (strain Sg).